The following is a 166-amino-acid chain: uncharacterized protein (166 aa).

Positions 2 to 82 (DNWVCYLIMS…KRLSKKRNIQ (81 aa)) constitute a GIY-YIG domain. Residues 23 to 43 (NNRQRRLNDHNNLNPSRKGAK) are disordered.

This is an uncharacterized protein from Acanthamoeba polyphaga mimivirus (APMV).